The following is a 65-amino-acid chain: Large ribosomal subunit protein uL30 (65 aa).

This sequence belongs to the universal ribosomal protein uL30 family. In terms of assembly, part of the 50S ribosomal subunit.

This is Large ribosomal subunit protein uL30 from Methylobacillus flagellatus (strain ATCC 51484 / DSM 6875 / VKM B-1610 / KT).